A 97-amino-acid chain; its full sequence is uncharacterized protein (97 aa).

Disordered regions lie at residues 1-20 (MTEGADMARTSRPPVTIASD) and 52-97 (VPAA…GRRA).

This is an uncharacterized protein from Paracoccus pantotrophus (Thiosphaera pantotropha).